A 488-amino-acid polypeptide reads, in one-letter code: Acetyl-CoA decarbonylase/synthase complex subunit gamma (488 aa).

The region spanning 1–61 (MPKKISAMDI…FEKNKKKIIE (61 aa)) is the 4Fe-4S domain. [4Fe-4S] cluster is bound by residues cysteine 19, cysteine 22, cysteine 27, and cysteine 44.

As to quaternary structure, heterodimer of delta and gamma chains. The ACDS complex is made up of alpha, epsilon, beta, gamma and delta chains with a probable stoichiometry of (alpha(2)epsilon(2))(4)-beta(8)-(gamma(1)delta(1))(8). The cofactor is corrinoid. It depends on [4Fe-4S] cluster as a cofactor.

It carries out the reaction 5,6,7,8-tetrahydrosarcinapterin + methyl-Co(III)-[corrinoid Fe-S protein] = 5-methyltetrahydrosarcinapterin + Co(I)-[corrinoid Fe-S protein] + H(+). Functionally, part of a complex that catalyzes the reversible cleavage of acetyl-CoA, allowing autotrophic growth from CO(2). This is Acetyl-CoA decarbonylase/synthase complex subunit gamma from Methanocaldococcus jannaschii (strain ATCC 43067 / DSM 2661 / JAL-1 / JCM 10045 / NBRC 100440) (Methanococcus jannaschii).